An 857-amino-acid chain; its full sequence is Glucans biosynthesis glucosyltransferase H (857 aa).

Helical transmembrane passes span 142 to 162, 196 to 216, 515 to 535, 572 to 592, 606 to 626, and 682 to 702; these read ILLT…KGIL, ILIL…TALM, VFLT…FLVL, LFST…ILIW, TLSM…RMIF, and FLWW…VSVI.

This sequence belongs to the glycosyltransferase 2 family. OpgH subfamily.

Its subcellular location is the cell inner membrane. The protein operates within glycan metabolism; osmoregulated periplasmic glucan (OPG) biosynthesis. Functionally, involved in the biosynthesis of osmoregulated periplasmic glucans (OPGs). This is Glucans biosynthesis glucosyltransferase H from Pseudomonas putida (strain W619).